The primary structure comprises 1439 residues: Myomesin-3 (1439 aa).

The disordered stretch occupies residues 1 to 57 (MTLPHSPGSAGEPQASQTVQVHRLEHRQEEEQKEERQHSLQMGSSVQRRTYRSSEEE). Over residues 22–38 (HRLEHRQEEEQKEERQH) the composition is skewed to basic and acidic residues. The span at 39–48 (SLQMGSSVQR) shows a compositional bias: polar residues. A coiled-coil region spans residues 119-149 (QRLLRQRRDWKALRQRTEEKVREAKELIELC). Ig-like C2-type domains lie at 154-246 (PWFW…AKVL) and 269-362 (PSAE…AYVF). 5 Fibronectin type-III domains span residues 376–471 (SPLN…TGDY), 504–599 (APTN…LKGK), 605–698 (PPAQ…VKQA), 704–799 (APYD…CKEW), and 806–901 (PPYD…LEDK). 2 consecutive Ig-like C2-type domains span residues 1122–1207 (PYFQ…LDLT) and 1336–1425 (AKVV…VTIS).

In terms of assembly, homodimer. In terms of tissue distribution, mainly expressed in slow muscle, extraocular muscle and embryonic/neonatal skeletal muscle (at protein level). Expression in skeletal muscle is fiber type specific, with the highest levels in type IIA fibers (intermediate speed) and lower levels in type I fibers.

The protein localises to the cytoplasm. Its subcellular location is the myofibril. It is found in the sarcomere. It localises to the m line. In terms of biological role, may link the intermediate filament cytoskeleton to the M-disk of the myofibrils in striated muscle. The polypeptide is Myomesin-3 (Myom3) (Mus musculus (Mouse)).